Reading from the N-terminus, the 457-residue chain is Ribosomal protein uS12 methylthiotransferase RimO (457 aa).

In terms of domain architecture, MTTase N-terminal spans 6 to 116 (PKVGFVSLGC…VMEAVHAALP (111 aa)). [4Fe-4S] cluster contacts are provided by Cys15, Cys51, Cys80, Cys147, Cys151, and Cys154. The region spanning 133-370 (LTPRHYAYLK…MARQAEISAA (238 aa)) is the Radical SAM core domain. In terms of domain architecture, TRAM spans 373-441 (EAKIGSVQQC…EHDLFGDALP (69 aa)).

The protein belongs to the methylthiotransferase family. RimO subfamily. [4Fe-4S] cluster is required as a cofactor.

The protein resides in the cytoplasm. It carries out the reaction L-aspartate(89)-[ribosomal protein uS12]-hydrogen + (sulfur carrier)-SH + AH2 + 2 S-adenosyl-L-methionine = 3-methylsulfanyl-L-aspartate(89)-[ribosomal protein uS12]-hydrogen + (sulfur carrier)-H + 5'-deoxyadenosine + L-methionine + A + S-adenosyl-L-homocysteine + 2 H(+). Its function is as follows. Catalyzes the methylthiolation of an aspartic acid residue of ribosomal protein uS12. This chain is Ribosomal protein uS12 methylthiotransferase RimO, found in Xanthomonas campestris pv. campestris (strain 8004).